Consider the following 529-residue polypeptide: Bifunctional purine biosynthesis protein PurH (529 aa).

The MGS-like domain maps to 1–148 (MQQRRPVRRA…KNHKDVAIVV (148 aa)). Lysine 287 is subject to N6-acetyllysine.

Belongs to the PurH family.

It catalyses the reaction (6R)-10-formyltetrahydrofolate + 5-amino-1-(5-phospho-beta-D-ribosyl)imidazole-4-carboxamide = 5-formamido-1-(5-phospho-D-ribosyl)imidazole-4-carboxamide + (6S)-5,6,7,8-tetrahydrofolate. The enzyme catalyses IMP + H2O = 5-formamido-1-(5-phospho-D-ribosyl)imidazole-4-carboxamide. It participates in purine metabolism; IMP biosynthesis via de novo pathway; 5-formamido-1-(5-phospho-D-ribosyl)imidazole-4-carboxamide from 5-amino-1-(5-phospho-D-ribosyl)imidazole-4-carboxamide (10-formyl THF route): step 1/1. Its pathway is purine metabolism; IMP biosynthesis via de novo pathway; IMP from 5-formamido-1-(5-phospho-D-ribosyl)imidazole-4-carboxamide: step 1/1. This chain is Bifunctional purine biosynthesis protein PurH, found in Escherichia coli O127:H6 (strain E2348/69 / EPEC).